Reading from the N-terminus, the 27-residue chain is Phospholipase A2 P-elapitoxin-Aa1a alpha chain (27 aa).

The protein belongs to the phospholipase A2 family. Group I subfamily. As to quaternary structure, heterotrimer of alpha, beta and gamma chains, each related to PLA2. It depends on Ca(2+) as a cofactor. Expressed by the venom gland.

It is found in the secreted. It catalyses the reaction a 1,2-diacyl-sn-glycero-3-phosphocholine + H2O = a 1-acyl-sn-glycero-3-phosphocholine + a fatty acid + H(+). Functionally, heterotrimer: presynaptic neurotoxin. Inhibits nerve-evoked twitch contractions but not responses to cholinergic agonists acetylcholine and carbachol and to depolarizing agonist KCl. Causes a fade in tetanic contractions. Displays a triphasic mode of action with depression, enhancement and blockade of neurotransmission. Does not display myotoxic activity such as changes in baseline muscle tension or inhibition of directly stimulated muscle twitches. All subunits are necessary for maximum toxicity. Its function is as follows. Monomer: Snake venom phospholipase A2 (PLA2) alpha chain that has enzymatic activity. PLA2 catalyzes the calcium-dependent hydrolysis of the 2-acyl groups in 3-sn-phosphoglycerides. This chain is Phospholipase A2 P-elapitoxin-Aa1a alpha chain, found in Acanthophis antarcticus (Common death adder).